Reading from the N-terminus, the 149-residue chain is MTKKNFKPQGQRTVMGFDFGTKSIGIAIGQELTGSASSLKAVKAQDGIPNWDDIAVQVNEWQPDLMVVGLPLNMDGTAQEVTFKAKKFANRLHNHYAIPVETQDERLTTADAKARLFEQGGYKNLGKGKVDNMSAVIILESFFETSYGE.

It belongs to the YqgF nuclease family.

The protein localises to the cytoplasm. Its function is as follows. Could be a nuclease involved in processing of the 5'-end of pre-16S rRNA. This is Putative pre-16S rRNA nuclease from Pseudoalteromonas translucida (strain TAC 125).